The sequence spans 151 residues: Group 10 secretory phospholipase A2 (151 aa).

The signal sequence occupies residues 1–17; that stretch reads MLLLLLLLLLGPGSCLS. A propeptide spanning residues 18 to 28 is cleaved from the precursor; it reads EATRRSHVYKR. Intrachain disulfides connect Cys-39/Cys-97, Cys-53/Cys-143, Cys-55/Cys-71, Cys-70/Cys-125, Cys-76/Cys-150, Cys-77/Cys-118, Cys-86/Cys-111, and Cys-104/Cys-116. 3 residues coordinate Ca(2+): Tyr-54, Gly-56, and Gly-58. His-74 is an active-site residue. Asp-75 lines the Ca(2+) pocket. Asp-119 is a catalytic residue.

The protein belongs to the phospholipase A2 family. Interacts with PLA2R1; this interaction mediates PLA2G10 clearance and inactivation. It depends on Ca(2+) as a cofactor.

The protein localises to the secreted. Its subcellular location is the lysosome. The protein resides in the cytoplasmic vesicle. It localises to the secretory vesicle. It is found in the acrosome. It carries out the reaction a 1,2-diacyl-sn-glycero-3-phosphocholine + H2O = a 1-acyl-sn-glycero-3-phosphocholine + a fatty acid + H(+). The enzyme catalyses 1-hexadecanoyl-2-(9Z-octadecenoyl)-sn-glycero-3-phosphocholine + H2O = 1-hexadecanoyl-sn-glycero-3-phosphocholine + (9Z)-octadecenoate + H(+). The catalysed reaction is 1-octadecanoyl-2-(5Z,8Z,11Z,14Z-eicosatetraenoyl)-sn-glycero-3-phosphocholine + H2O = 1-octadecanoyl-sn-glycero-3-phosphocholine + (5Z,8Z,11Z,14Z)-eicosatetraenoate + H(+). It catalyses the reaction 1,2-dihexadecanoyl-sn-glycero-3-phosphocholine + H2O = 1-hexadecanoyl-sn-glycero-3-phosphocholine + hexadecanoate + H(+). It carries out the reaction 1-hexadecanoyl-2-(9Z-octadecenoyl)-sn-glycero-3-phosphoglycerol + H2O = 1-hexadecanoyl-sn-glycero-3-phosphoglycerol + (9Z)-octadecenoate + H(+). The enzyme catalyses 1,2-dihexadecanoyl-sn-glycero-3-phospho-(1'-sn-glycerol) + H2O = 1-hexadecanoyl-sn-glycero-3-phospho-(1'-sn-glycerol) + hexadecanoate + H(+). The catalysed reaction is 1-hexadecanoyl-2-(9Z-octadecenoyl)-sn-glycero-3-phospho-L-serine + H2O = 1-hexadecanoyl-sn-glycero-3-phospho-L-serine + (9Z)-octadecenoate + H(+). It catalyses the reaction 1-hexadecanoyl-2-(9Z,12Z-octadecadienoyl)-sn-glycero-3-phosphoethanolamine + H2O = 1-hexadecanoyl-sn-glycero-3-phosphoethanolamine + (9Z,12Z)-octadecadienoate + H(+). It carries out the reaction 1-hexadecanoyl-2-(9Z-octadecenoyl)-sn-glycero-3-phosphate + H2O = 1-hexadecanoyl-sn-glycero-3-phosphate + (9Z)-octadecenoate + H(+). The enzyme catalyses 1-O-hexadecyl-2-acetyl-sn-glycero-3-phosphocholine + H2O = 1-O-hexadecyl-sn-glycero-3-phosphocholine + acetate + H(+). Secretory calcium-dependent phospholipase A2 that primarily targets extracellular phospholipids. Hydrolyzes the ester bond of the fatty acyl group attached at sn-2 position of phospholipids with preference for phosphatidylcholines and phosphatidylglycerols over phosphatidylethanolamines. Preferentially releases sn-2 omega-6 and omega-3 polyunsaturated fatty acyl (PUFA) chains over saturated fatty acyls. Contributes to phospholipid remodeling of very low-density lipoprotein (VLDL), low-density lipoprotein (LDL) and high-density lipoprotein (HDL) particles. Hydrolyzes LDL phospholipids releasing unsaturated fatty acids that regulate macrophage differentiation toward foam cells. Efficiently hydrolyzes and inactivates platelet activating factor (PAF), a potent lipid mediator present in oxidized LDL. May act in an autocrine and paracrine manner. Secreted by lung epithelium, targets membrane phospholipids of infiltrating eosinophils, releasing arachidonate and boosting eicosanoid and cysteinyl leukotriene synthesis involved in airway inflammatory response. Secreted by gut epithelium, hydrolyzes dietary and biliary phosphatidylcholines in the gastrointestinal lumen. Plays a stem cell regulator role in colon epithelium. Within intracellular compartment, mediates Paneth-like cell differentiation and its stem cell supporting functions by inhibiting the Wnt signaling pathway in intestinal stem cell (ISC). Secreted in the intestinal lumen upon inflammation, acts in an autocrine way and promotes prostaglandin E2 synthesis that stimulates Wnt signaling pathway in ISCs and tissue regeneration. May participate in hair follicle morphogenesis by regulating phosphatidylethanolamines metabolism at the outermost epithelial layer and facilitating melanin synthesis. By releasing lysophosphatidylcholines (LPCs) at sperm acrosome, controls sperm cell capacitation, acrosome reaction and overall fertility. May promote neurite outgrowth in neuron fibers involved in nociception. Contributes to lipid remodeling of cellular membranes and generation of lipid mediators involved in pathogen clearance. Cleaves sn-2 fatty acyl chains of phosphatidylglycerols and phosphatidylethanolamines, which are major components of membrane phospholipids in bacteria. Displays bactericidal activity against Gram-positive bacteria by directly hydrolyzing phospholipids of the bacterial membrane. In pulmonary epithelium, may contribute to host defense response against adenoviral infection. Prevents adenovirus entry into host cells by hydrolyzing host cell plasma membrane, releasing C16:0 LPCs that inhibit virus-mediated membrane fusion and viral infection. Likely prevents adenoviral entry into the endosomes of host cells. May play a role in maturation and activation of innate immune cells including macrophages, group 2 innate lymphoid cells and mast cells. The protein is Group 10 secretory phospholipase A2 (Pla2g10) of Rattus norvegicus (Rat).